The chain runs to 143 residues: Transcriptional regulator MraZ (143 aa).

SpoVT-AbrB domains are found at residues 5–47 (EYEH…PMPV) and 76–119 (ASDL…SAER).

This sequence belongs to the MraZ family. As to quaternary structure, forms oligomers.

The protein resides in the cytoplasm. It localises to the nucleoid. In Herpetosiphon aurantiacus (strain ATCC 23779 / DSM 785 / 114-95), this protein is Transcriptional regulator MraZ.